A 396-amino-acid chain; its full sequence is L-lactate dehydrogenase (396 aa).

The region spanning 1-380 (MIISAASDYR…SGDSLVQELG (380 aa)) is the FMN hydroxy acid dehydrogenase domain. Position 24 (tyrosine 24) interacts with substrate. The FMN site is built by serine 106 and glutamine 127. Position 129 (tyrosine 129) interacts with substrate. Threonine 155 provides a ligand contact to FMN. Arginine 164 is a substrate binding site. Residue lysine 251 coordinates FMN. Histidine 275 (proton acceptor) is an active-site residue. Arginine 278 contributes to the substrate binding site. 306–330 (DSGIRNGLDVVRMIALGADTVLLGR) lines the FMN pocket.

It belongs to the FMN-dependent alpha-hydroxy acid dehydrogenase family. It depends on FMN as a cofactor.

Its subcellular location is the cell inner membrane. The catalysed reaction is (S)-lactate + A = pyruvate + AH2. Catalyzes the conversion of L-lactate to pyruvate. Is coupled to the respiratory chain. The chain is L-lactate dehydrogenase from Salmonella arizonae (strain ATCC BAA-731 / CDC346-86 / RSK2980).